Consider the following 320-residue polypeptide: HPr kinase/phosphorylase (320 aa).

Catalysis depends on residues His-141 and Lys-162. ATP is bound at residue 156–163; it reads GHSGLGKS. Ser-163 serves as a coordination point for Mg(2+). Asp-180 serves as the catalytic Proton acceptor; for phosphorylation activity. Proton donor; for dephosphorylation activity. Positions 204 to 213 are important for the catalytic mechanism of both phosphorylation and dephosphorylation; that stretch reads LEVRGLGILN. Mg(2+) is bound at residue Glu-205. Residue Arg-248 is part of the active site. Residues 269-274 form an important for the catalytic mechanism of dephosphorylation region; that stretch reads PVAVGR.

It belongs to the HPrK/P family. Homohexamer. Requires Mg(2+) as cofactor.

The catalysed reaction is [HPr protein]-L-serine + ATP = [HPr protein]-O-phospho-L-serine + ADP + H(+). The enzyme catalyses [HPr protein]-O-phospho-L-serine + phosphate + H(+) = [HPr protein]-L-serine + diphosphate. Functionally, catalyzes the ATP- as well as the pyrophosphate-dependent phosphorylation of a specific serine residue in HPr, a phosphocarrier protein of the phosphoenolpyruvate-dependent sugar phosphotransferase system (PTS). HprK/P also catalyzes the pyrophosphate-producing, inorganic phosphate-dependent dephosphorylation (phosphorolysis) of seryl-phosphorylated HPr (P-Ser-HPr). In Neisseria meningitidis serogroup C / serotype 2a (strain ATCC 700532 / DSM 15464 / FAM18), this protein is HPr kinase/phosphorylase.